A 165-amino-acid chain; its full sequence is Large ribosomal subunit protein bL17 (165 aa).

The span at 138–158 shows a compositional bias: basic and acidic residues; the sequence is QEKREAQEKAREEKRTARKSD. The interval 138–165 is disordered; it reads QEKREAQEKAREEKRTARKSDSVPARKK.

Belongs to the bacterial ribosomal protein bL17 family. In terms of assembly, part of the 50S ribosomal subunit. Contacts protein L32.

The sequence is that of Large ribosomal subunit protein bL17 from Leptospira borgpetersenii serovar Hardjo-bovis (strain JB197).